A 706-amino-acid polypeptide reads, in one-letter code: Serotransferrin (706 aa).

An N-terminal signal peptide occupies residues 1-19 (MRLAIRALLACAVLGLCLA). Transferrin-like domains follow at residues 23-349 (VRWC…NLRE) and 363-691 (VKWC…NLRQ). Cystine bridges form between cysteine 26-cysteine 64 and cysteine 36-cysteine 55. The residue at position 40 (arginine 40) is a Dimethylated arginine. The Fe(3+) site is built by aspartate 79 and tyrosine 111. Disulfide bonds link cysteine 134–cysteine 215, cysteine 174–cysteine 190, cysteine 177–cysteine 198, cysteine 187–cysteine 200, and cysteine 248–cysteine 262. 4 residues coordinate hydrogencarbonate: threonine 136, arginine 140, alanine 142, and glycine 143. Tyrosine 209 contacts Fe(3+). Residue histidine 270 coordinates Fe(3+). 11 disulfide bridges follow: cysteine 360-cysteine 623, cysteine 366-cysteine 398, cysteine 376-cysteine 389, cysteine 423-cysteine 701, cysteine 441-cysteine 664, cysteine 474-cysteine 550, cysteine 498-cysteine 692, cysteine 508-cysteine 522, cysteine 519-cysteine 533, cysteine 590-cysteine 604, and cysteine 642-cysteine 647. A Phosphoserine modification is found at serine 391. Positions 413 and 449 each coordinate Fe(3+). Positions 476, 480, 482, and 483 each coordinate hydrogencarbonate. Asparagine 515 carries N-linked (GlcNAc...) asparagine glycosylation. Tyrosine 544 contributes to the Fe(3+) binding site. Histidine 612 contributes to the Fe(3+) binding site. Serine 693 is modified (phosphoserine).

Belongs to the transferrin family. As to quaternary structure, monomer. Part of a complex composed of SLC40A1/ferroportin, TF/transferrin and HEPH/hephaestin that transfers iron from cells to transferrin. In terms of tissue distribution, expressed by the liver and secreted in plasma.

Its subcellular location is the secreted. In terms of biological role, transferrins are iron binding transport proteins which can bind two Fe(3+) ions in association with the binding of an anion, usually bicarbonate. It is responsible for the transport of iron from sites of absorption and heme degradation to those of storage and utilization. Serum transferrin may also have a further role in stimulating cell proliferation. The chain is Serotransferrin (TF) from Equus caballus (Horse).